A 198-amino-acid polypeptide reads, in one-letter code: Nucleoside triphosphate pyrophosphatase 1 (198 aa).

The Proton acceptor role is filled by D75.

It belongs to the Maf family. A divalent metal cation serves as cofactor.

It is found in the cytoplasm. It catalyses the reaction a ribonucleoside 5'-triphosphate + H2O = a ribonucleoside 5'-phosphate + diphosphate + H(+). The enzyme catalyses a 2'-deoxyribonucleoside 5'-triphosphate + H2O = a 2'-deoxyribonucleoside 5'-phosphate + diphosphate + H(+). Nucleoside triphosphate pyrophosphatase. May have a dual role in cell division arrest and in preventing the incorporation of modified nucleotides into cellular nucleic acids. The polypeptide is Nucleoside triphosphate pyrophosphatase 1 (Jannaschia sp. (strain CCS1)).